The following is a 136-amino-acid chain: Small ribosomal subunit protein bS6 (136 aa).

Positions 117-130 (EERSRSSRRQREDV) are enriched in basic and acidic residues. The disordered stretch occupies residues 117-136 (EERSRSSRRQREDVIEGVEL).

It belongs to the bacterial ribosomal protein bS6 family.

In terms of biological role, binds together with bS18 to 16S ribosomal RNA. This is Small ribosomal subunit protein bS6 from Bartonella quintana (strain Toulouse) (Rochalimaea quintana).